Consider the following 420-residue polypeptide: NEDD8-specific protease 1 (420 aa).

Residues 257 to 281 are compositionally biased toward low complexity; the sequence is KSSDSSETSHESSNSNLKKSSESGS. The disordered stretch occupies residues 257–420; sequence KSSDSSETSH…EELVSGDFPF (164 aa). The span at 286–296 shows a compositional bias: basic and acidic residues; it reads NNHESDKDLHH. A compositionally biased stretch (basic residues) spans 297–310; sequence EGHHHHHHHHHHHH. Residues 311-324 show a composition bias toward basic and acidic residues; it reads SHDDDPSSPAEKKQ. Residues serine 329, serine 340, and serine 351 each carry the phosphoserine modification. Residues 355–377 show a composition bias toward basic and acidic residues; the sequence is NKEDHLPLLSDEKLDKSAIDKIE.

This sequence belongs to the peptidase C48 family. As to quaternary structure, interacts with csn1. It is, however, not a component of the signalosome.

It localises to the cytoplasm. Protease that catalyzes two essential functions in the NEDD8 pathway: processing of full-length NEDD8 to its mature form and deconjugation of NEDD8 from targeted proteins such as the pcu1, pcu2 and pcu4 cullins and other proteins. The sequence is that of NEDD8-specific protease 1 (nep1) from Schizosaccharomyces pombe (strain 972 / ATCC 24843) (Fission yeast).